We begin with the raw amino-acid sequence, 358 residues long: Probable BOI-related E3 ubiquitin-protein ligase 2 (358 aa).

A coiled-coil region spans residues 171 to 234 (KYEIEEKRKR…NQIWRDLAQT (64 aa)). The segment at 214–250 (LEERVKSLSIENQIWRDLAQTNEATANHLRTNLEHVL) is WRD domain. An RING-type zinc finger spans residues 310–345 (CRNCGEEESCVLLLPCRHLCLCGVCGSSVHTCPICT).

In terms of assembly, interacts with the DELLA proteins GAI, RGA, RGL1, RGL2 and RGL3.

It carries out the reaction S-ubiquitinyl-[E2 ubiquitin-conjugating enzyme]-L-cysteine + [acceptor protein]-L-lysine = [E2 ubiquitin-conjugating enzyme]-L-cysteine + N(6)-ubiquitinyl-[acceptor protein]-L-lysine.. Its pathway is protein degradation; proteasomal ubiquitin-dependent pathway. Probable E3 ubiquitin-protein ligase. Has no effect on the stability of the DELLA proteins. This Arabidopsis thaliana (Mouse-ear cress) protein is Probable BOI-related E3 ubiquitin-protein ligase 2 (BRG2).